We begin with the raw amino-acid sequence, 257 residues long: NAD-capped RNA hydrolase NudC (257 aa).

The substrate site is built by lysine 25 and arginine 69. Residues cysteine 98 and cysteine 101 each contribute to the Zn(2+) site. Glutamate 111 is a substrate binding site. Zn(2+) contacts are provided by cysteine 116 and cysteine 119. Tyrosine 124 serves as a coordination point for substrate. One can recognise a Nudix hydrolase domain in the interval 125–248 (PQIAPCIIVA…TVARRLIEDT (124 aa)). A divalent metal cation is bound by residues alanine 158, glutamate 174, and glutamate 178. The Nudix box motif lies at 159–180 (GFVEVGETLEQAVAREVMEESG). Position 192–199 (192–199 (QPWPFPQS)) interacts with substrate. Glutamate 219 lines the a divalent metal cation pocket. Alanine 241 lines the substrate pocket.

This sequence belongs to the Nudix hydrolase family. NudC subfamily. In terms of assembly, homodimer. Mg(2+) serves as cofactor. The cofactor is Mn(2+). Zn(2+) is required as a cofactor.

The enzyme catalyses a 5'-end NAD(+)-phospho-ribonucleoside in mRNA + H2O = a 5'-end phospho-adenosine-phospho-ribonucleoside in mRNA + beta-nicotinamide D-ribonucleotide + 2 H(+). The catalysed reaction is NAD(+) + H2O = beta-nicotinamide D-ribonucleotide + AMP + 2 H(+). It catalyses the reaction NADH + H2O = reduced beta-nicotinamide D-ribonucleotide + AMP + 2 H(+). Its function is as follows. mRNA decapping enzyme that specifically removes the nicotinamide adenine dinucleotide (NAD) cap from a subset of mRNAs by hydrolyzing the diphosphate linkage to produce nicotinamide mononucleotide (NMN) and 5' monophosphate mRNA. The NAD-cap is present at the 5'-end of some mRNAs and stabilizes RNA against 5'-processing. Has preference for mRNAs with a 5'-end purine. Catalyzes the hydrolysis of a broad range of dinucleotide pyrophosphates. This chain is NAD-capped RNA hydrolase NudC, found in Escherichia coli O127:H6 (strain E2348/69 / EPEC).